Here is a 409-residue protein sequence, read N- to C-terminus: tRNA-specific 2-thiouridylase MnmA (409 aa).

ATP is bound by residues 20-27 and Leu-46; that span reads AMSGGVDS. Residue Cys-114 is the Nucleophile of the active site. Cys-114 and Cys-210 are joined by a disulfide. Gly-138 serves as a coordination point for ATP. The segment at 160 to 162 is interaction with tRNA; sequence RDQ. The active-site Cysteine persulfide intermediate is the Cys-210.

The protein belongs to the MnmA/TRMU family.

The protein resides in the cytoplasm. The enzyme catalyses S-sulfanyl-L-cysteinyl-[protein] + uridine(34) in tRNA + AH2 + ATP = 2-thiouridine(34) in tRNA + L-cysteinyl-[protein] + A + AMP + diphosphate + H(+). Functionally, catalyzes the 2-thiolation of uridine at the wobble position (U34) of tRNA, leading to the formation of s(2)U34. This Bartonella henselae (strain ATCC 49882 / DSM 28221 / CCUG 30454 / Houston 1) (Rochalimaea henselae) protein is tRNA-specific 2-thiouridylase MnmA.